Here is a 335-residue protein sequence, read N- to C-terminus: Glycerol-3-phosphate dehydrogenase [NAD(P)+] (335 aa).

Residues S15, Y16, H36, and K110 each coordinate NADPH. Positions 110, 139, and 141 each coordinate sn-glycerol 3-phosphate. A143 contacts NADPH. 5 residues coordinate sn-glycerol 3-phosphate: K195, D248, S258, R259, and N260. K195 acts as the Proton acceptor in catalysis. R259 provides a ligand contact to NADPH. Residues V283 and E285 each contribute to the NADPH site.

Belongs to the NAD-dependent glycerol-3-phosphate dehydrogenase family.

It localises to the cytoplasm. The catalysed reaction is sn-glycerol 3-phosphate + NAD(+) = dihydroxyacetone phosphate + NADH + H(+). It carries out the reaction sn-glycerol 3-phosphate + NADP(+) = dihydroxyacetone phosphate + NADPH + H(+). The protein operates within membrane lipid metabolism; glycerophospholipid metabolism. Catalyzes the reduction of the glycolytic intermediate dihydroxyacetone phosphate (DHAP) to sn-glycerol 3-phosphate (G3P), the key precursor for phospholipid synthesis. The protein is Glycerol-3-phosphate dehydrogenase [NAD(P)+] of Mannheimia succiniciproducens (strain KCTC 0769BP / MBEL55E).